Reading from the N-terminus, the 111-residue chain is uncharacterized protein (111 aa).

Homodimer, or homotetramer.

This is an uncharacterized protein from Bacillus subtilis (strain 168).